The primary structure comprises 355 residues: Probable nitronate monooxygenase (355 aa).

FMN is bound by residues asparagine 71, glutamine 175, glycine 180, glycine 219, and 238 to 241; that span reads QMGT.

This sequence belongs to the nitronate monooxygenase family. NMO class I subfamily. FMN serves as cofactor.

The enzyme catalyses 3 propionate 3-nitronate + 3 O2 + H2O = 3 3-oxopropanoate + 2 nitrate + nitrite + H2O2 + 3 H(+). Nitronate monooxygenase that uses molecular oxygen to catalyze the oxidative denitrification of alkyl nitronates. Acts on propionate 3-nitronate (P3N), the presumed physiological substrate. Probably functions in the detoxification of P3N, a metabolic poison produced by plants and fungi as a defense mechanism. The polypeptide is Probable nitronate monooxygenase (Staphylococcus saprophyticus subsp. saprophyticus (strain ATCC 15305 / DSM 20229 / NCIMB 8711 / NCTC 7292 / S-41)).